The primary structure comprises 456 residues: 3-isopropylmalate dehydratase large subunit (456 aa).

The [4Fe-4S] cluster site is built by Cys336, Cys396, and Cys399.

It belongs to the aconitase/IPM isomerase family. LeuC type 1 subfamily. As to quaternary structure, heterodimer of LeuC and LeuD. [4Fe-4S] cluster serves as cofactor.

It carries out the reaction (2R,3S)-3-isopropylmalate = (2S)-2-isopropylmalate. It participates in amino-acid biosynthesis; L-leucine biosynthesis; L-leucine from 3-methyl-2-oxobutanoate: step 2/4. In terms of biological role, catalyzes the isomerization between 2-isopropylmalate and 3-isopropylmalate, via the formation of 2-isopropylmaleate. The polypeptide is 3-isopropylmalate dehydratase large subunit (Staphylococcus haemolyticus (strain JCSC1435)).